The following is a 300-amino-acid chain: MALWLPGGQLTLLLLLWVQQTPAGSTEAPLKVDVDLTPDSFDDQYQGCSEQMVEELNQGDYFIKEVDTHKYYSRAWQKAHLTWLNQAKALPESMTPVHAVAIVVFTLNLNVSSDLAKAMARAAGSPGQYSQSFHFKYLHYYLTSAIQLLRKDSSTKNGSLCYKVYHGMKDVSIGANVGSTIRFGQFLSASLLKEETRVSGNQTLFTIFTCLGASVQDFSLRKEVLIPPYELFEVVSKSGSPKGDLINLRSAGNMSTYNCQLLKACSKKCAPAPVVIGCLFLVTVVISSKSRAQRNLLAPF.

An N-terminal signal peptide occupies residues 1-23 (MALWLPGGQLTLLLLLWVQQTPA). Residues 24 to 269 (GSTEAPLKVD…QLLKACSKKC (246 aa)) are Extracellular-facing. Intrachain disulfides connect C48-C259 and C161-C210. Residues 70-255 (KYYSRAWQKA…INLRSAGNMS (186 aa)) form the TR mART core domain. N-linked (GlcNAc...) asparagine glycosylation is found at N110 and N157. An NAD(+)-binding site is contributed by Q185. N-linked (GlcNAc...) asparagine glycosylation occurs at N201. S219 provides a ligand contact to NAD(+). An N-linked (GlcNAc...) asparagine glycan is attached at N253. A lipid anchor (GPI-anchor amidated alanine) is attached at A264. Residues 265–300 (CSKKCAPAPVVIGCLFLVTVVISSKSRAQRNLLAPF) constitute a propeptide, removed in mature form. The helical transmembrane segment at 270–286 (APAPVVIGCLFLVTVVI) threads the bilayer. Residues 287–300 (SSKSRAQRNLLAPF) are Cytoplasmic-facing.

The protein belongs to the Arg-specific ADP-ribosyltransferase family.

Its subcellular location is the membrane. It localises to the cell membrane. It catalyses the reaction L-arginyl-[protein] + NAD(+) = N(omega)-(ADP-D-ribosyl)-L-arginyl-[protein] + nicotinamide + H(+). This Mus musculus (Mouse) protein is Ecto-ADP-ribosyltransferase 4 (Art4).